A 773-amino-acid polypeptide reads, in one-letter code: Phenylalanine--tRNA ligase beta subunit (773 aa).

Residues L39–N150 enclose the tRNA-binding domain. A B5 domain is found at K391–S467. Residues D445, D451, E454, and E455 each coordinate Mg(2+). One can recognise an FDX-ACB domain in the interval S682 to R773.

Belongs to the phenylalanyl-tRNA synthetase beta subunit family. Type 1 subfamily. Tetramer of two alpha and two beta subunits. The cofactor is Mg(2+).

The protein localises to the cytoplasm. The catalysed reaction is tRNA(Phe) + L-phenylalanine + ATP = L-phenylalanyl-tRNA(Phe) + AMP + diphosphate + H(+). This Campylobacter jejuni (strain RM1221) protein is Phenylalanine--tRNA ligase beta subunit.